We begin with the raw amino-acid sequence, 251 residues long: Probable transcriptional regulatory protein Blon_1155/BLIJ_1182 (251 aa).

The protein belongs to the TACO1 family.

The protein resides in the cytoplasm. This chain is Probable transcriptional regulatory protein Blon_1155/BLIJ_1182, found in Bifidobacterium longum subsp. infantis (strain ATCC 15697 / DSM 20088 / JCM 1222 / NCTC 11817 / S12).